The chain runs to 515 residues: ATP synthase subunit alpha (515 aa).

171–178 (GDRQTGKT) contacts ATP.

It belongs to the ATPase alpha/beta chains family. In terms of assembly, F-type ATPases have 2 components, CF(1) - the catalytic core - and CF(0) - the membrane proton channel. CF(1) has five subunits: alpha(3), beta(3), gamma(1), delta(1), epsilon(1). CF(0) has three main subunits: a(1), b(2) and c(9-12). The alpha and beta chains form an alternating ring which encloses part of the gamma chain. CF(1) is attached to CF(0) by a central stalk formed by the gamma and epsilon chains, while a peripheral stalk is formed by the delta and b chains.

The protein resides in the cell inner membrane. It catalyses the reaction ATP + H2O + 4 H(+)(in) = ADP + phosphate + 5 H(+)(out). Functionally, produces ATP from ADP in the presence of a proton gradient across the membrane. The alpha chain is a regulatory subunit. The sequence is that of ATP synthase subunit alpha from Xanthomonas oryzae pv. oryzae (strain MAFF 311018).